A 715-amino-acid polypeptide reads, in one-letter code: Metastasis-associated protein MTA1 (715 aa).

In terms of domain architecture, BAH spans methionine 1–lysine 164. Residues glycine 165 to glycine 276 form the ELM2 domain. A Glycyl lysine isopeptide (Lys-Gly) (interchain with G-Cter in ubiquitin) cross-link involves residue lysine 182. One can recognise an SANT domain in the interval aspartate 283–arginine 335. At serine 386 the chain carries Phosphoserine. The GATA-type; atypical zinc finger occupies cysteine 393 to cysteine 420. A disordered region spans residues arginine 435–serine 460. Phosphoserine occurs at positions 446 and 449. A Glycyl lysine isopeptide (Lys-Gly) (interchain with G-Cter in SUMO2 and SUMO3) cross-link involves residue lysine 509. Serine 522 is modified (phosphoserine). Residues proline 545–proline 552 carry the SH3-binding motif. Lysine 549 is covalently cross-linked (Glycyl lysine isopeptide (Lys-Gly) (interchain with G-Cter in SUMO2)). Threonine 564 is modified (phosphothreonine). Position 576 is a phosphoserine (serine 576). Position 578 is a phosphothreonine (threonine 578). N6-acetyllysine; alternate is present on lysine 626. Lysine 626 is covalently cross-linked (Glycyl lysine isopeptide (Lys-Gly) (interchain with G-Cter in ubiquitin); alternate). Serine 639 is subject to Phosphoserine. Residues aspartate 656 to lysine 686 form an interaction with RBBP4 region. A disordered region spans residues serine 673–aspartate 715. Positions leucine 696 to proline 705 match the SH3-binding motif. Positions isoleucine 711–aspartate 715 match the SUMO interaction motif 1 (SIM); crucial for efficient sumoylation motif.

It belongs to the metastasis-associated protein family. As to quaternary structure, component of the nucleosome remodeling and deacetylase (NuRD) repressor complex, composed of core proteins MTA1, MTA2, MTA3, RBBP4, RBBP7, HDAC1, HDAC2, MBD2, MBD3, and peripherally associated proteins CDK2AP1, CDK2AP2, GATAD2A, GATAD2B, CHD3, CHD4 and CHD5. The exact stoichiometry of the NuRD complex is unknown, and some subunits such as MBD2 and MBD3, GATAD2A and GATAD2B, and CHD3, CHD4 and CHD5 define mutually exclusive NuRD complexes. Interacts with RBBP4; the interaction is direct. Interacts with BMAL1. Interacts with CLOCK. Interacts with COP1. Interacts with CSNK1G2 in the cytoplasm. Interacts with EP300. Interacts with HDAC2. Interacts with IFI16. Interacts with ITGB3BP/CENPR. Interacts with MBD3L2. Interacts with MDM2. Interacts with NACC2. Interacts with p53/TP53. Interacts with PIAS1. Interacts with PIAS3. Interacts with PIAS4. Interacts with PWWP2A. Interacts with PWWP2B. Interacts with SENP1. Interacts with SENP2. Interacts with SIX3; facilitates the binding of SIX3 to the core DNA motif of SIX3 promoter. Interacts with SUMO1. Interacts with SUMO2. Interacts with TFCP2L1; which is indispensable for TFCP2L1-mediated self-renewal-promoting effect and endoderm-inhibiting action. Interacts with TFAP2C. Interacts with TPR. Interacts with UBE2I/UBC9. Phosphorylation by CSNK1G2/CK1 triggered by estrogen enhances corepression of estrogen receptor (ER). Post-translationally, acetylation is essential for its transcriptional coactivator activity. In terms of processing, sumoylation positively regulates its transcriptional corepressor activity but does not affect the protein stability. Sumoylated preferentially by SUMO2 or SUMO3 than SUMO1. Sumoylation is enhanced by PIAS1/3/4 and preferentially sumoylated by SUMO2 in the presence of PIAS1/3/4. Desumoylated by SENP1. Ubiquitinated by COP1, which leads to proteasomal degradation. As to expression, widely expressed. High expression in brain, liver, kidney, and cardiac muscle, ovaries, adrenal glands and virgin mammary glands. Higher in tumors than in adjacent normal tissue from the same individual. Up-regulated in a wide variety of cancers including breast, liver, ovarian, and colorectal cancer and its expression levels are closely correlated with tumor aggressiveness and metastasis.

The protein localises to the nucleus. Its subcellular location is the cytoplasm. It is found in the nucleus envelope. The protein resides in the cytoskeleton. Its function is as follows. Transcriptional coregulator which can act as both a transcriptional corepressor and coactivator. Acts as a component of the histone deacetylase NuRD complex which participates in the remodeling of chromatin. In the NuRD complex, regulates transcription of its targets by modifying the acetylation status of the target chromatin and cofactor accessibility to the target DNA. In conjunction with other components of NuRD, acts as a transcriptional corepressor of BRCA1, ESR1, TFF1 and CDKN1A. Acts as a transcriptional coactivator of BCAS3, and SUMO2, independent of the NuRD complex. Stimulates the expression of WNT1 by inhibiting the expression of its transcriptional corepressor SIX3. Regulates p53-dependent and -independent DNA repair processes following genotoxic stress. Regulates the stability and function of p53/TP53 by inhibiting its ubiquitination by COP1 and MDM2 thereby regulating the p53-dependent DNA repair. Plays a role in the regulation of the circadian clock and is essential for the generation and maintenance of circadian rhythms under constant light and for normal entrainment of behavior to light-dark (LD) cycles. Positively regulates the CLOCK-BMAL1 heterodimer mediated transcriptional activation of its own transcription and the transcription of CRY1. Regulates deacetylation of BMAL1 by regulating SIRT1 expression, resulting in derepressing CRY1-mediated transcription repression. With TFCP2L1, promotes establishment and maintenance of pluripotency in embryonic stem cells (ESCs) and inhibits endoderm differentiation. In terms of biological role, binds to ESR1 and sequesters it in the cytoplasm and enhances its non-genomic responses. This chain is Metastasis-associated protein MTA1 (MTA1), found in Homo sapiens (Human).